A 378-amino-acid polypeptide reads, in one-letter code: Bifunctional enzyme IspD/IspF (378 aa).

A 2-C-methyl-D-erythritol 4-phosphate cytidylyltransferase region spans residues 1–222 (MTETVAIIVA…RLLSPTGAPR (222 aa)). The segment at 222-378 (RIGKGYDVHE…EAVALLMPKG (157 aa)) is 2-C-methyl-D-erythritol 2,4-cyclodiphosphate synthase. The a divalent metal cation site is built by aspartate 228 and histidine 230. Residues 228 to 230 (DVH) and 254 to 255 (HS) each bind 4-CDP-2-C-methyl-D-erythritol 2-phosphate. Histidine 262 contacts a divalent metal cation. Residues 276–278 (DIG), 352–355 (TTTE), phenylalanine 359, and arginine 362 each bind 4-CDP-2-C-methyl-D-erythritol 2-phosphate.

This sequence in the N-terminal section; belongs to the IspD/TarI cytidylyltransferase family. IspD subfamily. The protein in the C-terminal section; belongs to the IspF family. A divalent metal cation serves as cofactor.

The catalysed reaction is 2-C-methyl-D-erythritol 4-phosphate + CTP + H(+) = 4-CDP-2-C-methyl-D-erythritol + diphosphate. The enzyme catalyses 4-CDP-2-C-methyl-D-erythritol 2-phosphate = 2-C-methyl-D-erythritol 2,4-cyclic diphosphate + CMP. It participates in isoprenoid biosynthesis; isopentenyl diphosphate biosynthesis via DXP pathway; isopentenyl diphosphate from 1-deoxy-D-xylulose 5-phosphate: step 2/6. It functions in the pathway isoprenoid biosynthesis; isopentenyl diphosphate biosynthesis via DXP pathway; isopentenyl diphosphate from 1-deoxy-D-xylulose 5-phosphate: step 4/6. In terms of biological role, bifunctional enzyme that catalyzes the formation of 4-diphosphocytidyl-2-C-methyl-D-erythritol from CTP and 2-C-methyl-D-erythritol 4-phosphate (MEP) (IspD), and catalyzes the conversion of 4-diphosphocytidyl-2-C-methyl-D-erythritol 2-phosphate (CDP-ME2P) to 2-C-methyl-D-erythritol 2,4-cyclodiphosphate (ME-CPP) with a corresponding release of cytidine 5-monophosphate (CMP) (IspF). In Hyphomonas neptunium (strain ATCC 15444), this protein is Bifunctional enzyme IspD/IspF.